A 536-amino-acid chain; its full sequence is G-protein coupled receptor Mth2 (536 aa).

Over 1-210 (MAERDHYHTI…DDNSTVKIIN (210 aa)) the chain is Extracellular. 5 disulfide bridges follow: Cys-17/Cys-71, Cys-73/Cys-78, Cys-82/Cys-177, Cys-83/Cys-96, and Cys-138/Cys-197. 2 N-linked (GlcNAc...) asparagine glycosylation sites follow: Asn-24 and Asn-33. Residues Asn-103, Asn-113, Asn-118, Asn-159, Asn-184, and Asn-203 are each glycosylated (N-linked (GlcNAc...) asparagine). The helical transmembrane segment at 211–231 (AYAMMFSIPFMMLTIAVYLLI) threads the bilayer. Topologically, residues 232–241 (PELRNQHGKS) are cytoplasmic. The helical transmembrane segment at 242–262 (LVCYLVGLTVGYTSLCYVQLY) threads the bilayer. Residues 263-273 (QVDATGDACKV) are Extracellular-facing. The helical transmembrane segment at 274 to 294 (FGYTAYFFFMGAYMWLSVISF) threads the bilayer. Topologically, residues 295–314 (DLWHNFRGTRGINRFQEKKR) are cytoplasmic. The chain crosses the membrane as a helical span at residues 315 to 335 (FLFYSLYSWGIAVVFLAFTYI). Over 336 to 365 (AQELTNLPAYLKPGIGDGVYCWLDMSNWAA) the chain is Extracellular. The chain crosses the membrane as a helical span at residues 366 to 386 (MIYFYGPILVIVVANTIMFIM). Topologically, residues 387-417 (TAIKIHGVQREMARIIASENSTKNLRTEKDK) are cytoplasmic. A helical membrane pass occupies residues 418–438 (FGLFLRLFLIMGITWLTELIS). The Extracellular segment spans residues 439-449 (YFVGSDKGWSK). The chain crosses the membrane as a helical span at residues 450–470 (LFYISDLANAMQGFLIFMLFV). Topologically, residues 471 to 536 (MKKKVKHLIT…VDPQKTTIFR (66 aa)) are cytoplasmic. A disordered region spans residues 487–506 (RDGSNQRQSQYSTKTTSSSV). Low complexity predominate over residues 492–505 (QRQSQYSTKTTSSS).

It belongs to the G-protein coupled receptor 2 family. Mth subfamily. Homodimer.

The protein localises to the cell membrane. In terms of biological role, involved in biological aging and stress response. Essential for adult survival. In Drosophila yakuba (Fruit fly), this protein is G-protein coupled receptor Mth2 (mth2).